We begin with the raw amino-acid sequence, 2259 residues long: Golgin subfamily A member 4 (2259 aa).

The segment at 1 to 54 (MFKKLKQKISEEQQQLQQALAPAQASSSSSTPTRTRSRTSSFTDQLDDATPNRE) is disordered. The residue at position 10 (Ser-10) is a Phosphoserine. The segment covering 12–41 (EQQQLQQALAPAQASSSSSTPTRTRSRTSS) has biased composition (low complexity). Thr-39 carries the phosphothreonine modification. Phosphoserine occurs at positions 41, 104, and 111. The tract at residues 165-235 (SLSREQLLQR…EELQMDQQAK (71 aa)) is interaction with MACF1. A coiled-coil region spans residues 167-2182 (SREQLLQRLR…SYEKSVCAAA (2016 aa)). 2 stretches are compositionally biased toward basic and acidic residues: residues 1932–1946 (LEDRPEENSKSHVIE) and 1954–1977 (DGRHSDLESKLAGSEREKQKLSKE). Residues 1932–1977 (LEDRPEENSKSHVIESKLGTPMDGRHSDLESKLAGSEREKQKLSKE) form a disordered region. In terms of domain architecture, GRIP spans 2199–2246 (LFGEPTEFEYLRKVLFEYMMGRETKTMAKVITTVLRFPDDQAQKILER).

In terms of assembly, homodimer. Interacts with GTP-bound ARL1 and ARL3. Interacts with MACF1. Directly interacts with TBC1D23. Interacts with FAM91A1; this interaction may be mediated by TBC1D23. In terms of tissue distribution, expressed in the head of epididymal sperm but not in testicular sperm (at protein level).

The protein resides in the cytoplasm. Its subcellular location is the golgi apparatus membrane. The protein localises to the golgi apparatus. It localises to the trans-Golgi network membrane. Its function is as follows. Involved in vesicular trafficking at the Golgi apparatus level. May play a role in delivery of transport vesicles containing GPI-linked proteins from the trans-Golgi network through its interaction with MACF1. Involved in endosome-to-Golgi trafficking. This chain is Golgin subfamily A member 4, found in Rattus norvegicus (Rat).